The sequence spans 171 residues: Peptidyl-prolyl cis-trans isomerase slr1251 (171 aa).

Residues 6–169 (FFDITIGSDT…QAIVISDCGE (164 aa)) enclose the PPIase cyclophilin-type domain.

This sequence belongs to the cyclophilin-type PPIase family.

The enzyme catalyses [protein]-peptidylproline (omega=180) = [protein]-peptidylproline (omega=0). PPIases accelerate the folding of proteins. It catalyzes the cis-trans isomerization of proline imidic peptide bonds in oligopeptides. In Synechocystis sp. (strain ATCC 27184 / PCC 6803 / Kazusa), this protein is Peptidyl-prolyl cis-trans isomerase slr1251.